We begin with the raw amino-acid sequence, 858 residues long: Phospholipase D gamma 1 (858 aa).

Residues 27 to 163 (PFATSSGSLR…CSGNRIEGLF (137 aa)) enclose the C2 domain. D225 is a Ca(2+) binding site. Positions 364-399 (TIYTHHQKTVIVDAEAAQNRRKIVAFVGGLDLCNGR) constitute a PLD phosphodiesterase 1 domain. Residues H369, K371, and D376 contribute to the active site. Position 369 (H369) interacts with a 1,2-diacyl-sn-glycero-3-phosphate. The Ca(2+) site is built by H405 and H437. Q565 lines the a 1,2-diacyl-sn-glycero-3-phosphate pocket. S680 is modified (phosphoserine). Residues 704–731 (FMIYVHSKGMVVDDEFVLIGSANINQRS) form the PLD phosphodiesterase 2 domain. Residues H709, K711, and D716 contribute to the active site. Residue H709 coordinates a 1,2-diacyl-sn-glycero-3-phosphate. E772 is a binding site for Ca(2+).

This sequence belongs to the phospholipase D family. C2-PLD subfamily. The cofactor is Ca(2+). As to expression, highly expressed in roots and flowers, moderately in stems, leaves and seedlings and low in siliques. Not detected in seeds.

Its subcellular location is the cytoplasm. The protein localises to the membrane. It catalyses the reaction a 1,2-diacyl-sn-glycero-3-phosphocholine + H2O = a 1,2-diacyl-sn-glycero-3-phosphate + choline + H(+). Inhibited by neomycin. Up-regulated by PIP2 binding. Hydrolyzes glycerol-phospholipids at the terminal phosphodiesteric bond to generate phosphatidic acids (PA). Plays an important role in various cellular processes, including phytohormone action, vesicular trafficking, secretion, cytoskeletal arrangement, meiosis, tumor promotion, pathogenesis, membrane deterioration and senescence. Can use phosphatidylserine (PS) and phosphatidylethanolamine (PE) as substrates only in the presence of PIP2. Can use phosphatidylcholine (PC), phosphatidylglycerol (PG) or N-acylphosphatidylethanolamine (NAPE) as substrates in the presence of PE and PIP2. Involved in membrane lipid modulation under aluminum (Al) stress and negatively modulate plant tolerance to Al. This is Phospholipase D gamma 1 from Arabidopsis thaliana (Mouse-ear cress).